A 124-amino-acid chain; its full sequence is Small ribosomal subunit protein uS12 (124 aa).

The residue at position 89 (Asp89) is a 3-methylthioaspartic acid. The tract at residues 104–124 (TQGVKNRGQARSRYGAKKEKK) is disordered. Residues 111 to 124 (GQARSRYGAKKEKK) are compositionally biased toward basic residues.

It belongs to the universal ribosomal protein uS12 family. As to quaternary structure, part of the 30S ribosomal subunit. Contacts proteins S8 and S17. May interact with IF1 in the 30S initiation complex.

In terms of biological role, with S4 and S5 plays an important role in translational accuracy. Functionally, interacts with and stabilizes bases of the 16S rRNA that are involved in tRNA selection in the A site and with the mRNA backbone. Located at the interface of the 30S and 50S subunits, it traverses the body of the 30S subunit contacting proteins on the other side and probably holding the rRNA structure together. The combined cluster of proteins S8, S12 and S17 appears to hold together the shoulder and platform of the 30S subunit. The polypeptide is Small ribosomal subunit protein uS12 (Micrococcus luteus (strain ATCC 4698 / DSM 20030 / JCM 1464 / CCM 169 / CCUG 5858 / IAM 1056 / NBRC 3333 / NCIMB 9278 / NCTC 2665 / VKM Ac-2230) (Micrococcus lysodeikticus)).